A 197-amino-acid chain; its full sequence is MPKVGMQPIRRQQLIEATLQAVDQVGMGDASIALIARLAGVSNGIISHYFRDKNGLIAATMGYIMSMLNEGVRARRQALTDDSPRAHLKVIIEGNFDASQVNGPAMKTWLAFWASSMHQPDLHRLQRINDHRLYSNLCCQFRRALPLYHARKAARGLAALIDGLWLRGALSGDAFDTDQAIRIAYEYMDLQLAKQER.

The 61-residue stretch at 8-68 (PIRRQQLIEA…ATMGYIMSML (61 aa)) folds into the HTH tetR-type domain. Residues 31 to 50 (SIALIARLAGVSNGIISHYF) constitute a DNA-binding region (H-T-H motif).

It participates in amine and polyamine biosynthesis; betaine biosynthesis via choline pathway [regulation]. Functionally, repressor involved in the biosynthesis of the osmoprotectant glycine betaine. It represses transcription of the choline transporter BetT and the genes of BetAB involved in the synthesis of glycine betaine. The polypeptide is HTH-type transcriptional regulator BetI (Pseudomonas fluorescens (strain ATCC BAA-477 / NRRL B-23932 / Pf-5)).